A 78-amino-acid chain; its full sequence is Beta-defensin 12 (78 aa).

An N-terminal signal peptide occupies residues 1 to 27; the sequence is MALSREVFYFGFALFFIVVELPSGSWA. 3 disulfide bridges follow: Cys-46/Cys-73, Cys-53/Cys-67, and Cys-57/Cys-74.

This sequence belongs to the beta-defensin family. Only expressed in epididymis (caput, corpus and cauda).

It localises to the secreted. Its function is as follows. Has antibacterial activity. The polypeptide is Beta-defensin 12 (Defb12) (Mus musculus (Mouse)).